The chain runs to 768 residues: Integrin beta-8 (768 aa).

Positions 1–42 (MCGSALGLPPAAFVRLRSCRPGPAAFLRAAWVLSLVLGLGRS) are cleaved as a signal peptide. Residues 43–683 (ENSRCASSHA…ECFSSPSYLR (641 aa)) are Extracellular-facing. The PSI domain maps to 46-95 (RCASSHAVSCSECLALGPDCGWCVHEDFISGGPRSERCDIVSNLISKGCP). 25 cysteine pairs are disulfide-bonded: Cys47–Cys65, Cys55–Cys469, Cys58–Cys83, Cys68–Cys94, Cys211–Cys218, Cys266–Cys307, Cys407–Cys419, Cys439–Cys467, Cys471–Cys491, Cys471–Cys494, Cys481–Cys494, Cys499–Cys528, Cys511–Cys526, Cys520–Cys531, Cys533–Cys546, Cys553–Cys567, Cys561–Cys572, Cys574–Cys583, Cys585–Cys609, Cys593–Cys607, Cys601–Cys612, Cys614–Cys624, Cys627–Cys630, Cys634–Cys661, and Cys640–Cys657. A VWFA domain is found at 146–384 (PVDLYYLVDV…NLVVEAYQKL (239 aa)). Mg(2+) is bound by residues Asp154 and Ser156. Residue Asp193 participates in Ca(2+) binding. N-linked (GlcNAc...) asparagine glycosylation is present at Asn233. The Ca(2+) site is built by Asn249, Asp251, Pro253, and Glu254. Position 254 (Glu254) interacts with Mg(2+). An N-linked (GlcNAc...) asparagine glycan is attached at Asn402. N-linked (GlcNAc...) asparagine glycans are attached at residues Asn421, Asn431, and Asn456. I-EGF domains lie at 471-495 (CEAS…PQCQ), 499-547 (CHQE…KYCE), 548-584 (KDDF…DRCQ), and 585-625 (CPSA…RFCE). Asn648 is a glycosylation site (N-linked (GlcNAc...) asparagine). Residues 684–703 (IFFIIFIVTFLIGLLKILII) form a helical membrane-spanning segment. Residues 704 to 768 (RQVILQWNSS…NAHETFRCNF (65 aa)) are Cytoplasmic-facing.

The protein belongs to the integrin beta chain family. As to quaternary structure, heterodimer of an alpha and a beta subunit. Beta-8 (ITGB8) associates with alpha-V (ITGAV) to form ITGAV:ITGB8. ITGAV:ITGB8 interacts with TGFB1. As to expression, placenta, kidney, brain, ovary, uterus and in several transformed cells.

Its subcellular location is the cell membrane. Integrin alpha-V:beta-8 (ITGAV:ITGB8) is a receptor for fibronectin. It recognizes the sequence R-G-D in its ligands. Integrin alpha-V:beta-6 (ITGAV:ITGB6) mediates R-G-D-dependent release of transforming growth factor beta-1 (TGF-beta-1) from regulatory Latency-associated peptide (LAP), thereby playing a key role in TGF-beta-1 activation on the surface of activated regulatory T-cells (Tregs). Required during vasculogenesis. This Oryctolagus cuniculus (Rabbit) protein is Integrin beta-8 (ITGB8).